The sequence spans 275 residues: Cell division protein FtsQ (275 aa).

A disordered region spans residues 1–20 (MRDLHKKKPRPVTQNRLKKP). Over 1-38 (MRDLHKKKPRPVTQNRLKKPPKTCKPINYRGILKKTAK) the chain is Cytoplasmic. A helical membrane pass occupies residues 39–61 (VVGGAALISAVGCAGYGIYRIIA). The Periplasmic portion of the chain corresponds to 62–275 (GTTFFKLERI…YSDKIIVKKV (214 aa)). The region spanning 66-134 (FKLERIEVSE…NTLSMQIAER (69 aa)) is the POTRA domain.

Belongs to the FtsQ/DivIB family. FtsQ subfamily.

Its subcellular location is the cell inner membrane. Essential cell division protein. This is Cell division protein FtsQ from Geotalea daltonii (strain DSM 22248 / JCM 15807 / FRC-32) (Geobacter daltonii).